We begin with the raw amino-acid sequence, 348 residues long: EGF-like domain containing protein 1 (348 aa).

The first 19 residues, 1 to 19 (MFYLSTFMTIVISLSLVSC), serve as a signal peptide directing secretion. Positions 60-92 (TGSDCKVTCQNNGRCYDGNKCLCSSDYTGHLCE) constitute an EGF-like domain. 3 disulfides stabilise this stretch: Cys-64/Cys-74, Cys-68/Cys-80, and Cys-82/Cys-91. Residues 99–342 (RCTLDGVVFE…PTCAAPAVSQ (244 aa)) enclose the ZP domain.

Prismatic layer of shell (at protein level). Expressed primarily in the mantle with highest level in the mantle edge and lower level in the mantle pallium.

Its subcellular location is the secreted. The chain is EGF-like domain containing protein 1 from Margaritifera margaritifera (Freshwater pearl mussel).